The sequence spans 398 residues: Flavin-containing monooxygenase ustF1 (398 aa).

An N-terminal signal peptide occupies residues 1–22; it reads MTVSQVRRVAVIGAGISGVVST. 13-18 serves as a coordination point for FAD; the sequence is GAGISG. N-linked (GlcNAc...) asparagine glycans are attached at residues Asn53, Asn57, Asn119, and Asn126. 194–199 serves as a coordination point for NADP(+); the sequence is GGGVSS. N-linked (GlcNAc...) asparagine glycosylation is found at Asn236, Asn243, and Asn271.

It belongs to the FMO family.

It functions in the pathway mycotoxin biosynthesis. Flavin-containing monooxygenase; part of the gene cluster that mediates the biosynthesis of the secondary metabolite ustiloxin B, an antimitotic tetrapeptide. First, ustA is processed by the subtilisin-like endoprotease Kex2 that is outside the ustiloxin B gene cluster, at the C-terminal side of Arg-Lys, after transfer to Golgi apparatus through the endoplasmic reticulum (ER). Cleavage by KEX2 generates 16 peptides YAIG-I to YAIG-XVI. To process the precursor peptide further, at least two peptidases are necessary to cleave the N-terminal and C-terminal sides of the Tyr-Ala-Ile-Gly core peptide which serves as backbone for the synthesis of ustiloxin B, through cyclization and modification of the tyrosine with a non-protein coding amino acid, norvaline. One of the two peptidases must be the serine peptidase ustP; and the other pepdidase is probably ustH. Macrocyclization of the core peptide derived from ustA requires the tyrosinase ustQ, as well as the homologous oxidases ustYa and ustYb, and leads to the production of the first cyclization product N-desmethylustiloxin F. For the formation of N-desmethylustiloxin F, three oxidation steps are required, hydroxylation at the benzylic position, hydroxylation at either the aromatic ring of Tyr or beta-position of Ile, and oxidative cyclization. UstQ may catalyze the oxidation of a phenol moiety, whereas the ustYa and ustYb are most likely responsible for the remaining two-step oxidations. N-desmethylustiloxin F is then methylated by ustM to yield ustiloxin F which in turn substrate of the cytochrome P450 monooxygenase ustC which catalyzes the formation of S-deoxyustiloxin H. The flavoprotein monooxygenases ustF1 and ustF2 then participate in the modification of the side chain of S-deoxyustiloxin H, leading to the synthesis of an oxime intermediate, via ustiloxin H. Finally, carboxylative dehydration performed by the cysteine desulfurase-like protein ustD yields ustiloxin B. This chain is Flavin-containing monooxygenase ustF1, found in Aspergillus flavus (strain ATCC 200026 / FGSC A1120 / IAM 13836 / NRRL 3357 / JCM 12722 / SRRC 167).